Reading from the N-terminus, the 582-residue chain is Arginine--tRNA ligase (582 aa).

Residues 128–138 carry the 'HIGH' region motif; it reads PNLAKEMHVGH.

It belongs to the class-I aminoacyl-tRNA synthetase family. Monomer.

Its subcellular location is the cytoplasm. The catalysed reaction is tRNA(Arg) + L-arginine + ATP = L-arginyl-tRNA(Arg) + AMP + diphosphate. The polypeptide is Arginine--tRNA ligase (Colwellia psychrerythraea (strain 34H / ATCC BAA-681) (Vibrio psychroerythus)).